The chain runs to 241 residues: Phosphoribosyl isomerase A (241 aa).

The active-site Proton acceptor is the Asp-11. Catalysis depends on Asp-130, which acts as the Proton donor.

This sequence belongs to the HisA/HisF family.

The protein resides in the cytoplasm. The enzyme catalyses 1-(5-phospho-beta-D-ribosyl)-5-[(5-phospho-beta-D-ribosylamino)methylideneamino]imidazole-4-carboxamide = 5-[(5-phospho-1-deoxy-D-ribulos-1-ylimino)methylamino]-1-(5-phospho-beta-D-ribosyl)imidazole-4-carboxamide. The catalysed reaction is N-(5-phospho-beta-D-ribosyl)anthranilate = 1-(2-carboxyphenylamino)-1-deoxy-D-ribulose 5-phosphate. It participates in amino-acid biosynthesis; L-histidine biosynthesis; L-histidine from 5-phospho-alpha-D-ribose 1-diphosphate: step 4/9. It functions in the pathway amino-acid biosynthesis; L-tryptophan biosynthesis; L-tryptophan from chorismate: step 3/5. In terms of biological role, involved in both the histidine and tryptophan biosynthetic pathways. This chain is Phosphoribosyl isomerase A, found in Streptomyces griseus subsp. griseus (strain JCM 4626 / CBS 651.72 / NBRC 13350 / KCC S-0626 / ISP 5235).